The primary structure comprises 272 residues: Insulin-like growth factor-binding protein 5 (272 aa).

Positions 1–20 are cleaved as a signal peptide; it reads MVLLTAVLLLLAAYAGPAQS. The IGFBP N-terminal domain maps to 23–103; that stretch reads SFVHCEPCDE…LHGRGVCLNE (81 aa). 6 cysteine pairs are disulfide-bonded: cysteine 27-cysteine 53, cysteine 30-cysteine 55, cysteine 38-cysteine 56, cysteine 45-cysteine 59, cysteine 67-cysteine 80, and cysteine 74-cysteine 100. Residues 111 to 122 show a composition bias toward basic and acidic residues; it reads KIERDSREHEEP. The segment at 111–130 is disordered; the sequence is KIERDSREHEEPTTSEMAEE. Residue serine 116 is modified to Phosphoserine; by FAM20C. The O-linked (HexNAc...) threonine glycan is linked to threonine 172. Positions 189-263 constitute a Thyroglobulin type-1 domain; it reads QGPCRRHMEA…MEYVDGDFQC (75 aa). Intrachain disulfides connect cysteine 192/cysteine 219, cysteine 230/cysteine 241, and cysteine 243/cysteine 263.

In terms of assembly, interacts with IGF1; this interaction enhances the growth stimulatory effects of IGF1 on fibroblasts. Interacts with CAV1; this interaction allows trafficking of IGFBP5 from the plasma membrane to the nucleus. Interacts with NCL; this interaction is necessary for IGFBP5 localization to the nucleus. Cleaved by C1S in extracellular space. Osteosarcoma, and at lower levels in liver, kidney and brain.

The protein resides in the secreted. It localises to the cytoplasm. It is found in the nucleus. Its function is as follows. Multifunctional protein that plays a critical role in regulating the availability of IGFs to their receptors and thereby regulates IGF-mediated cellular processes including proliferation, differentiation, and apoptosis in a cell-type specific manner. Increases the cell proliferation of osteoblasts, intestinal smooth muscle cells and neuroblastoma cells. Enhances adhesion and survival of epithelial cells but decreases adhesion of mesenchymal cells. Once secreted, acts as a major mediator of mTORC1-dependent feedback inhibition of IGF1 signaling. Also plays a role in the induction of extracellular matrix (ECM) production and deposition independently of its nuclear translocation and binding to IGFs. Acts itself as a growth factor that can act independently of IGFs to regulate bone formation. Acts as a ligand for the ROR1 receptor which triggers formation of ROR1/HER2 heterodimer to enhance CREB oncogenic signaling. This is Insulin-like growth factor-binding protein 5 (IGFBP5) from Homo sapiens (Human).